We begin with the raw amino-acid sequence, 126 residues long: Phosphoribosyl-AMP cyclohydrolase (126 aa).

Mg(2+) is bound at residue Asp-77. Position 78 (Cys-78) interacts with Zn(2+). Residues Asp-79 and Asp-81 each coordinate Mg(2+). 2 residues coordinate Zn(2+): Cys-95 and Cys-102.

It belongs to the PRA-CH family. In terms of assembly, homodimer. The cofactor is Mg(2+). It depends on Zn(2+) as a cofactor.

It is found in the cytoplasm. It catalyses the reaction 1-(5-phospho-beta-D-ribosyl)-5'-AMP + H2O = 1-(5-phospho-beta-D-ribosyl)-5-[(5-phospho-beta-D-ribosylamino)methylideneamino]imidazole-4-carboxamide. Its pathway is amino-acid biosynthesis; L-histidine biosynthesis; L-histidine from 5-phospho-alpha-D-ribose 1-diphosphate: step 3/9. In terms of biological role, catalyzes the hydrolysis of the adenine ring of phosphoribosyl-AMP. The protein is Phosphoribosyl-AMP cyclohydrolase of Cellvibrio japonicus (strain Ueda107) (Pseudomonas fluorescens subsp. cellulosa).